The chain runs to 714 residues: Glycine--tRNA ligase beta subunit (714 aa).

The protein belongs to the class-II aminoacyl-tRNA synthetase family. As to quaternary structure, tetramer of two alpha and two beta subunits.

The protein resides in the cytoplasm. The catalysed reaction is tRNA(Gly) + glycine + ATP = glycyl-tRNA(Gly) + AMP + diphosphate. This Rhodospirillum centenum (strain ATCC 51521 / SW) protein is Glycine--tRNA ligase beta subunit.